Reading from the N-terminus, the 288-residue chain is MNVVTHIHELKELIKQHQEKQHSIGFVPTMGFLHEGHLTLAKEARDQNDLVVMSIFVNPLQFGPNEDFESYPRDMERDQRLAKEAGVDILFTPDVKEMYANEPSITMTVRKRTDVLCGKKRPGHFDGVVTVLTKLFHLVAPTNAYFGLKDAQQVAVIDAMIKDFFFDLHLVSVPTVREEDGLAKSSRNVYLSDKERQEAPALYRALKKGQSAIENGERDVSRIYQLVEEDILQTSGEIDYIEIYSYPELEPLQQLAGQVIIAIAVKFSRARLIDNVIFHVPESGEKHV.

30–37 (MGFLHEGH) is an ATP binding site. The active-site Proton donor is His-37. Gln-61 is a binding site for (R)-pantoate. Beta-alanine is bound at residue Gln-61. 147-150 (GLKD) provides a ligand contact to ATP. (R)-pantoate is bound at residue Gln-153. ATP contacts are provided by residues Val-176 and 184-187 (KSSR).

The protein belongs to the pantothenate synthetase family. In terms of assembly, homodimer.

The protein localises to the cytoplasm. The enzyme catalyses (R)-pantoate + beta-alanine + ATP = (R)-pantothenate + AMP + diphosphate + H(+). Its pathway is cofactor biosynthesis; (R)-pantothenate biosynthesis; (R)-pantothenate from (R)-pantoate and beta-alanine: step 1/1. In terms of biological role, catalyzes the condensation of pantoate with beta-alanine in an ATP-dependent reaction via a pantoyl-adenylate intermediate. This is Pantothenate synthetase from Bacillus pumilus (strain SAFR-032).